Reading from the N-terminus, the 693-residue chain is Elongation factor G 1 (693 aa).

The region spanning asparagine 4 to histidine 281 is the tr-type G domain. Residues alanine 13–threonine 20, aspartate 80–histidine 84, and asparagine 134–aspartate 137 each bind GTP.

It belongs to the TRAFAC class translation factor GTPase superfamily. Classic translation factor GTPase family. EF-G/EF-2 subfamily.

It is found in the cytoplasm. Functionally, catalyzes the GTP-dependent ribosomal translocation step during translation elongation. During this step, the ribosome changes from the pre-translocational (PRE) to the post-translocational (POST) state as the newly formed A-site-bound peptidyl-tRNA and P-site-bound deacylated tRNA move to the P and E sites, respectively. Catalyzes the coordinated movement of the two tRNA molecules, the mRNA and conformational changes in the ribosome. This Borreliella burgdorferi (strain ATCC 35210 / DSM 4680 / CIP 102532 / B31) (Borrelia burgdorferi) protein is Elongation factor G 1 (fusA).